The sequence spans 792 residues: Host cell factor 2 (792 aa).

4 Kelch repeats span residues 34 to 79 (LMII…GFVC), 83 to 130 (RILV…RLGH), 207 to 255 (KMYV…VIGN), and 257 to 303 (MYIF…VSDS). Positions 359–449 (APSQVQLIKA…QPATKETSMK (91 aa)) constitute a Fibronectin type-III 1 domain. The disordered stretch occupies residues 399 to 447 (ASSDSSAAPNMQGVRMDPHRQGSNNIVPNSINDTINSTKTEQPATKETS). A compositionally biased stretch (polar residues) spans 419 to 445 (QGSNNIVPNSINDTINSTKTEQPATKE). Residue lysine 553 forms a Glycyl lysine isopeptide (Lys-Gly) (interchain with G-Cter in SUMO2) linkage. Fibronectin type-III domains follow at residues 583–675 (TPSN…TCIP) and 677–787 (FPGA…GNNK).

Binds KMT2A/MLL1. Component of the MLL1/MLL complex, at least composed of KMT2A/MLL1, ASH2L, RBBP5, DPY30, WDR5, MEN1, HCFC1 and HCFC2. Interacts with TASOR. As to expression, highly expressed in testis. Detected at lower levels in spleen, thymus, prostate, ovary, small intestine and colon.

Its subcellular location is the cytoplasm. It localises to the nucleus. In Homo sapiens (Human), this protein is Host cell factor 2 (HCFC2).